A 295-amino-acid chain; its full sequence is Mediator of RNA polymerase II transcription subunit 27 (295 aa).

It belongs to the Mediator complex subunit 27 family. In terms of assembly, component of the Mediator complex.

It is found in the nucleus. In terms of biological role, component of the Mediator complex, a coactivator involved in the regulated transcription of nearly all RNA polymerase II-dependent genes. Mediator functions as a bridge to convey information from gene-specific regulatory proteins to the basal RNA polymerase II transcription machinery. Mediator is recruited to promoters by direct interactions with regulatory proteins and serves as a scaffold for the assembly of a functional preinitiation complex with RNA polymerase II and the general transcription factors. In Anopheles gambiae (African malaria mosquito), this protein is Mediator of RNA polymerase II transcription subunit 27 (MED27).